A 75-amino-acid polypeptide reads, in one-letter code: Sec-independent protein translocase protein TatA (75 aa).

A helical membrane pass occupies residues Met1 to Gly21. The segment at Asp45–Ser75 is disordered.

Belongs to the TatA/E family. In terms of assembly, the Tat system comprises two distinct complexes: a TatABC complex, containing multiple copies of TatA, TatB and TatC subunits, and a separate TatA complex, containing only TatA subunits. Substrates initially bind to the TatABC complex, which probably triggers association of the separate TatA complex to form the active translocon.

Its subcellular location is the cell inner membrane. Its function is as follows. Part of the twin-arginine translocation (Tat) system that transports large folded proteins containing a characteristic twin-arginine motif in their signal peptide across membranes. TatA could form the protein-conducting channel of the Tat system. This Bordetella bronchiseptica (strain ATCC BAA-588 / NCTC 13252 / RB50) (Alcaligenes bronchisepticus) protein is Sec-independent protein translocase protein TatA.